A 517-amino-acid chain; its full sequence is 2,3-bisphosphoglycerate-independent phosphoglycerate mutase (517 aa).

Positions 14 and 64 each coordinate Mn(2+). Residue Ser-64 is the Phosphoserine intermediate of the active site. Residues His-125, 155-156 (RD), Arg-187, Arg-193, 259-262 (RPDR), and Lys-334 each bind substrate. 5 residues coordinate Mn(2+): Asp-401, His-405, Asp-442, His-443, and His-461.

It belongs to the BPG-independent phosphoglycerate mutase family. In terms of assembly, monomer. Mn(2+) is required as a cofactor.

It catalyses the reaction (2R)-2-phosphoglycerate = (2R)-3-phosphoglycerate. Its pathway is carbohydrate degradation; glycolysis; pyruvate from D-glyceraldehyde 3-phosphate: step 3/5. Its function is as follows. Catalyzes the interconversion of 2-phosphoglycerate and 3-phosphoglycerate. The protein is 2,3-bisphosphoglycerate-independent phosphoglycerate mutase of Symbiobacterium thermophilum (strain DSM 24528 / JCM 14929 / IAM 14863 / T).